The primary structure comprises 115 residues: Glycine cleavage system H-like protein (115 aa).

One can recognise a Lipoyl-binding domain in the interval 17–99; that stretch reads VVRLGLTEKM…EGEGWLAVVR (83 aa). Lys-58 is modified (N6-lipoyllysine).

The protein belongs to the GcvH family. The cofactor is (R)-lipoate.

This Chlamydia pneumoniae (Chlamydophila pneumoniae) protein is Glycine cleavage system H-like protein.